The chain runs to 261 residues: 5'-nucleotidase SurE (261 aa).

A divalent metal cation contacts are provided by Asp8, Asp9, Ser43, and Asn96.

This sequence belongs to the SurE nucleotidase family. It depends on a divalent metal cation as a cofactor.

It is found in the cytoplasm. It carries out the reaction a ribonucleoside 5'-phosphate + H2O = a ribonucleoside + phosphate. Nucleotidase that shows phosphatase activity on nucleoside 5'-monophosphates. This chain is 5'-nucleotidase SurE, found in Dinoroseobacter shibae (strain DSM 16493 / NCIMB 14021 / DFL 12).